Here is a 487-residue protein sequence, read N- to C-terminus: Ribosomal protein uS12 methylthiotransferase RimO (487 aa).

The MTTase N-terminal domain occupies 38 to 149 (PTVAFAHLGC…IVEVLEQVEA (112 aa)). Residues cysteine 47, cysteine 83, cysteine 112, cysteine 187, cysteine 191, and cysteine 194 each coordinate [4Fe-4S] cluster. The 230-residue stretch at 173–402 (TTSEAVAYLK…MEAQQAISAE (230 aa)) folds into the Radical SAM core domain. The 72-residue stretch at 405–476 (GAWVGRIVDV…IYDLEGEVVG (72 aa)) folds into the TRAM domain.

The protein belongs to the methylthiotransferase family. RimO subfamily. The cofactor is [4Fe-4S] cluster.

It is found in the cytoplasm. It carries out the reaction L-aspartate(89)-[ribosomal protein uS12]-hydrogen + (sulfur carrier)-SH + AH2 + 2 S-adenosyl-L-methionine = 3-methylsulfanyl-L-aspartate(89)-[ribosomal protein uS12]-hydrogen + (sulfur carrier)-H + 5'-deoxyadenosine + L-methionine + A + S-adenosyl-L-homocysteine + 2 H(+). Functionally, catalyzes the methylthiolation of an aspartic acid residue of ribosomal protein uS12. The protein is Ribosomal protein uS12 methylthiotransferase RimO of Synechococcus sp. (strain RCC307).